The sequence spans 152 residues: Arginine repressor (152 aa).

It belongs to the ArgR family.

The protein localises to the cytoplasm. It participates in amino-acid biosynthesis; L-arginine biosynthesis [regulation]. Its function is as follows. Regulates arginine biosynthesis genes. This chain is Arginine repressor, found in Lactococcus lactis subsp. lactis (strain IL1403) (Streptococcus lactis).